The sequence spans 1727 residues: Nucleoporin alm1 (1727 aa).

Coiled coils occupy residues 57–361 (QEVN…KNTS), 443–463 (NFLSESLETSNNNLTKVQAEL), 542–740 (IKEA…AEEL), 804–1106 (AARK…INES), 1223–1427 (GERS…QLNK), 1497–1555 (NEEE…AESA), and 1601–1664 (QKEW…KKDS). Residues 1423–1448 (EQLNKPSATPTATTQSEPSTVSLEEF) show a composition bias toward polar residues. Disordered regions lie at residues 1423–1459 (EQLNKPSATPTATTQSEPSTVSLEEFNSTKEELSSTQ), 1477–1500 (EKVRQNSNKSEGTSKDTEIPNEEE), and 1656–1727 (LEQS…KKAK). Composition is skewed to polar residues over residues 1672–1684 (ASKNTDSNKSNSE) and 1702–1714 (VDTNSPPKRSSSD). Serine 1706 carries the post-translational modification Phosphoserine.

Its subcellular location is the nucleus. The protein resides in the nuclear pore complex. The protein localises to the nucleus envelope. Functionally, maintains the proteasome and its anchor cut8 at the nucleus envelope and is required for kinetochore component proteostasis. Proper kinetochore stoichiometry ensures the correct attachment of kinetochores to spindle microtubules during cytokinesis. Required for the localization of spindle assembly checkpoint (SAC) protein mad2 and bub1 to the nucleus envelope during interphase, but not their localization during mitosis. This is Nucleoporin alm1 from Schizosaccharomyces pombe (strain 972 / ATCC 24843) (Fission yeast).